The following is a 429-amino-acid chain: Serine hydroxymethyltransferase (429 aa).

(6S)-5,6,7,8-tetrahydrofolate is bound by residues L126 and 130 to 132; that span reads GHL. K235 is modified (N6-(pyridoxal phosphate)lysine). 359–361 lines the (6S)-5,6,7,8-tetrahydrofolate pocket; sequence SPF.

It belongs to the SHMT family. Homodimer. It depends on pyridoxal 5'-phosphate as a cofactor.

Its subcellular location is the cytoplasm. It catalyses the reaction (6R)-5,10-methylene-5,6,7,8-tetrahydrofolate + glycine + H2O = (6S)-5,6,7,8-tetrahydrofolate + L-serine. The protein operates within one-carbon metabolism; tetrahydrofolate interconversion. It functions in the pathway amino-acid biosynthesis; glycine biosynthesis; glycine from L-serine: step 1/1. Functionally, catalyzes the reversible interconversion of serine and glycine with tetrahydrofolate (THF) serving as the one-carbon carrier. This reaction serves as the major source of one-carbon groups required for the biosynthesis of purines, thymidylate, methionine, and other important biomolecules. Also exhibits THF-independent aldolase activity toward beta-hydroxyamino acids, producing glycine and aldehydes, via a retro-aldol mechanism. The polypeptide is Serine hydroxymethyltransferase (Synechococcus sp. (strain WH7803)).